Here is a 454-residue protein sequence, read N- to C-terminus: NEDD8-activating enzyme E1 catalytic subunit (454 aa).

Ala2 is modified (N-acetylalanine). 56–80 (GLGCELLKDLALSGFRNLEVIDMDR) contacts ATP. Cys215 serves as the catalytic Glycyl thioester intermediate.

Belongs to the ubiquitin-activating E1 family. UBA3 subfamily. In terms of assembly, heterodimer of UBA3/ECR1 and AXR1. Interacts with NEDD8 and RCE1. In terms of tissue distribution, expressed in shoot, root and floral meristems, in vascular tissues of cotyledons and mature leaves, and in the stele of the root.

The protein localises to the nucleus. It catalyses the reaction ATP + [NEDD8 protein] + [E1 NEDD8-activating enzyme]-L-cysteine = AMP + diphosphate + [E1 NEDD8-activating enzyme]-S-[NEDD8 protein]-yl-L-cysteine.. Its pathway is protein modification; protein neddylation. Functionally, catalytic subunit of the dimeric ECR1-AXR1 E1 enzyme. E1 activates NEDD8/RUB1 by first adenylating its C-terminal glycine residue with ATP, thereafter linking this residue to the side chain of the catalytic cysteine, yielding a NEDD8-ECR1 thioester and free AMP. E1 finally transfers NEDD8 to the catalytic cysteine of RCE1. The polypeptide is NEDD8-activating enzyme E1 catalytic subunit (ECR1) (Arabidopsis thaliana (Mouse-ear cress)).